Consider the following 134-residue polypeptide: Small ribosomal subunit protein uS9 (134 aa).

Positions 113-134 (REVERKKYGLKKARRAPQFSKR) are disordered. Residues 120–134 (YGLKKARRAPQFSKR) show a composition bias toward basic residues.

This sequence belongs to the universal ribosomal protein uS9 family.

In Thermotoga maritima (strain ATCC 43589 / DSM 3109 / JCM 10099 / NBRC 100826 / MSB8), this protein is Small ribosomal subunit protein uS9 (rpsI).